The primary structure comprises 123 residues: Fluoride-specific ion channel FluC 1 (123 aa).

The next 3 helical transmembrane spans lie at 33 to 53, 59 to 79, and 98 to 118; these read TFLI…LFGV, YGTM…TTFS, and VFYL…GAML. Residues G73 and T76 each coordinate Na(+).

Belongs to the fluoride channel Fluc/FEX (TC 1.A.43) family.

It localises to the cell inner membrane. It catalyses the reaction fluoride(in) = fluoride(out). Its activity is regulated as follows. Na(+) is not transported, but it plays an essential structural role and its presence is essential for fluoride channel function. In terms of biological role, fluoride-specific ion channel. Important for reducing fluoride concentration in the cell, thus reducing its toxicity. The protein is Fluoride-specific ion channel FluC 1 of Brucella melitensis biotype 1 (strain ATCC 23456 / CCUG 17765 / NCTC 10094 / 16M).